A 354-amino-acid chain; its full sequence is Elongation factor Ts (354 aa).

The interval 81–84 is involved in Mg(2+) ion dislocation from EF-Tu; that stretch reads TDFV.

This sequence belongs to the EF-Ts family.

Its subcellular location is the cytoplasm. Functionally, associates with the EF-Tu.GDP complex and induces the exchange of GDP to GTP. It remains bound to the aminoacyl-tRNA.EF-Tu.GTP complex up to the GTP hydrolysis stage on the ribosome. The protein is Elongation factor Ts of Campylobacter concisus (strain 13826).